Here is a 513-residue protein sequence, read N- to C-terminus: GMP synthase [glutamine-hydrolyzing] (513 aa).

A Glutamine amidotransferase type-1 domain is found at Ser3–Asp200. Cys80 (nucleophile) is an active-site residue. Catalysis depends on residues His174 and Glu176. A GMPS ATP-PPase domain is found at Trp201–Arg388. Ser228 to Thr234 lines the ATP pocket.

Homodimer.

The enzyme catalyses XMP + L-glutamine + ATP + H2O = GMP + L-glutamate + AMP + diphosphate + 2 H(+). It functions in the pathway purine metabolism; GMP biosynthesis; GMP from XMP (L-Gln route): step 1/1. Catalyzes the synthesis of GMP from XMP. This Chlorobium luteolum (strain DSM 273 / BCRC 81028 / 2530) (Pelodictyon luteolum) protein is GMP synthase [glutamine-hydrolyzing].